Here is a 321-residue protein sequence, read N- to C-terminus: Fibronectin type III domain-containing protein 8 (321 aa).

Residues 175 to 277 (VPEAPFVCEH…KPYKFATVAT (103 aa)) form the Fibronectin type-III domain.

This is Fibronectin type III domain-containing protein 8 (FNDC8) from Bos taurus (Bovine).